Reading from the N-terminus, the 187-residue chain is ATP synthase subunit delta, chloroplastic (187 aa).

It belongs to the ATPase delta chain family. As to quaternary structure, F-type ATPases have 2 components, F(1) - the catalytic core - and F(0) - the membrane proton channel. F(1) has five subunits: alpha(3), beta(3), gamma(1), delta(1), epsilon(1). CF(0) has four main subunits: a(1), b(1), b'(1) and c(10-14). The alpha and beta chains form an alternating ring which encloses part of the gamma chain. F(1) is attached to F(0) by a central stalk formed by the gamma and epsilon chains, while a peripheral stalk is formed by the delta, b and b' chains.

It localises to the plastid. The protein localises to the chloroplast thylakoid membrane. F(1)F(0) ATP synthase produces ATP from ADP in the presence of a proton or sodium gradient. F-type ATPases consist of two structural domains, F(1) containing the extramembraneous catalytic core and F(0) containing the membrane proton channel, linked together by a central stalk and a peripheral stalk. During catalysis, ATP synthesis in the catalytic domain of F(1) is coupled via a rotary mechanism of the central stalk subunits to proton translocation. Functionally, this protein is part of the stalk that links CF(0) to CF(1). It either transmits conformational changes from CF(0) to CF(1) or is implicated in proton conduction. The polypeptide is ATP synthase subunit delta, chloroplastic (Thalassiosira pseudonana (Marine diatom)).